A 238-amino-acid chain; its full sequence is tRNA (guanine-N(7)-)-methyltransferase (238 aa).

S-adenosyl-L-methionine contacts are provided by glutamate 68, glutamate 93, aspartate 120, and aspartate 143. The active site involves aspartate 143. Substrate is bound by residues lysine 147, aspartate 179, and 216-219; that span reads TKFE.

Belongs to the class I-like SAM-binding methyltransferase superfamily. TrmB family.

The enzyme catalyses guanosine(46) in tRNA + S-adenosyl-L-methionine = N(7)-methylguanosine(46) in tRNA + S-adenosyl-L-homocysteine. It functions in the pathway tRNA modification; N(7)-methylguanine-tRNA biosynthesis. Catalyzes the formation of N(7)-methylguanine at position 46 (m7G46) in tRNA. This is tRNA (guanine-N(7)-)-methyltransferase from Ectopseudomonas mendocina (strain ymp) (Pseudomonas mendocina).